Reading from the N-terminus, the 782-residue chain is Endonuclease MutS2 (782 aa).

An ATP-binding site is contributed by 336-343 (GPNTGGKT). The Smr domain maps to 707-782 (LDLRGYRYED…GFGVTVATLK (76 aa)).

It belongs to the DNA mismatch repair MutS family. MutS2 subfamily. As to quaternary structure, homodimer. Binds to stalled ribosomes, contacting rRNA.

In terms of biological role, endonuclease that is involved in the suppression of homologous recombination and thus may have a key role in the control of bacterial genetic diversity. Acts as a ribosome collision sensor, splitting the ribosome into its 2 subunits. Detects stalled/collided 70S ribosomes which it binds and splits by an ATP-hydrolysis driven conformational change. Acts upstream of the ribosome quality control system (RQC), a ribosome-associated complex that mediates the extraction of incompletely synthesized nascent chains from stalled ribosomes and their subsequent degradation. Probably generates substrates for RQC. The protein is Endonuclease MutS2 of Staphylococcus aureus (strain Mu50 / ATCC 700699).